Consider the following 530-residue polypeptide: MAVKALNPKAEVARAQAALAVNISAARGLQDVLRTNLGPKGTMKMLVSGAGDIKLTKDGNVLLQEMQIQHPTASLIAKVATAQDDITGDGTTSNVLIIGELLKQADLYISEGLHPRIVAEGFEIAKEKALEVLEQVKVTKEMDRETLIDVAKTSLRTKVHTELADILTEAVVDSVLAVRKPGEPIDLHMVEIMEMKHKSETDTTLIRGLVLDHGARHPDMKKRVEDAYILTCNVSLEYEKTEVSAGFFYKSAEEREKLVKAERKFIEDRVSKIIDLKRRVCGDSDKGFIVINQKGIDPFSLDALAKEGIVALRRAKRRNMERLTLACGGTAMNSVEDLTPDCLGHAGLVYEYTLGEEKYTFIEKCDNPRSVTLLIRGPNKHTLTQIKDAVRDGLRAVKNAIEDGCVIPGAGALEVAVANALVKHKPNVKGRAQLGVQAFADALLIIPKVLAQNSGYDPQETLVKVQAEHAESGQLTGVDLNTGEPMVAAAAGIWDNYNVKKQLLHSCTVIASNILLVDEIMRAGMSSLKG.

Gly-38 provides a ligand contact to ADP. Gly-38 serves as a coordination point for ATP. Asp-89 is a binding site for Mg(2+). Positions 90, 91, 92, 93, 157, 158, and 410 each coordinate ADP. Residues Gly-90, Thr-91, and Thr-92 each contribute to the ATP site. Ala-410, Gly-411, Asp-495, and Lys-500 together coordinate ATP. ADP is bound at residue Asp-495.

In terms of assembly, component of the chaperonin-containing T-complex (TRiC), a hexadecamer composed of two identical back-to-back stacked rings enclosing a protein folding chamber. Each ring is made up of eight different subunits: TCP1/CCT1, CCT2, CCT3, CCT4, CCT5, CCT6A/CCT6, CCT7, CCT8. Interacts with PACRG.

It is found in the cytoplasm. It catalyses the reaction ATP + H2O = ADP + phosphate + H(+). Functionally, component of the chaperonin-containing T-complex (TRiC), a molecular chaperone complex that assists the folding of actin, tubulin and other proteins upon ATP hydrolysis. The polypeptide is T-complex protein 1 subunit zeta (Gallus gallus (Chicken)).